We begin with the raw amino-acid sequence, 127 residues long: Large ribosomal subunit protein bL17 (127 aa).

The protein belongs to the bacterial ribosomal protein bL17 family. In terms of assembly, part of the 50S ribosomal subunit. Contacts protein L32.

In Alcanivorax borkumensis (strain ATCC 700651 / DSM 11573 / NCIMB 13689 / SK2), this protein is Large ribosomal subunit protein bL17.